Here is a 330-residue protein sequence, read N- to C-terminus: MKKSFIDQQKEISFVKNTFTQYLIDKLDVVEVQGPILSKVGDGMQDNLNGIENPVTVNVLQIPDATYEVVHSLAKWKRHTLARFGFNEGEGLVVNMKALRPDEDSLDATHSVYVDQWDWEKVIPDGHRNIAYLKETVETIYKVIRLTELAVEARYDIEAVLPKKITFIHSEELVEKYPDLTPKERENAITKEYGAVFLIGIGGVLPDGKPHDGRAPDYDDWTTESEKGYHGLNGDILVWNEQLGHAFELSSMGIRVDEDALKRQVEITGDQDRLKLDWHQALLQGQFPLTIGGGIGQSRMAMFLLRKKHIGEVQTSVWPDAVRETYENIL.

This sequence belongs to the class-II aminoacyl-tRNA synthetase family. AsnA subfamily.

Its subcellular location is the cytoplasm. The enzyme catalyses L-aspartate + NH4(+) + ATP = L-asparagine + AMP + diphosphate + H(+). It participates in amino-acid biosynthesis; L-asparagine biosynthesis; L-asparagine from L-aspartate (ammonia route): step 1/1. The polypeptide is Aspartate--ammonia ligase (Streptococcus thermophilus (strain ATCC BAA-250 / LMG 18311)).